We begin with the raw amino-acid sequence, 100 residues long: uncharacterized protein (100 aa).

This is an uncharacterized protein from Homo sapiens (Human).